Reading from the N-terminus, the 219-residue chain is MEYLSALNPSDLLRSVSNISSEFGRRVWTSAPPPQRPFRVCDHKRTIRKGLTAATRQELLAKALETLLLNGVLTLVLEEDGTAVDSEDFFQLLEDDTCLMVLQSGQSWSPTRSGVLSYGLGRERPKHSKDIARFTFDVYKQNPRDLFGSLNVKATFYGLYSMSCDFQGLGPKKVLRELLRWTSTLLQGLGHMLLGISSTLRHAVEGAEQWQQKGRLHSY.

The 77-residue stretch at 34–110 (PQRPFRVCDH…VLQSGQSWSP (77 aa)) folds into the CIDE-N domain.

This sequence belongs to the CIDE family. In terms of assembly, interacts with DFFA. Interacts with DFFB; inhibited by DFFB. Interacts with APOB. Interacts with PREB/SEC12; facilitating loading of SCAP-SREBP into COPII vesicles. As to quaternary structure, (Microbial infection) Interacts (via N-terminus) with HCV non-structural protein 5A (via N-terminus); this interaction seems to regulate the association of HCV particles with ApoE. As to expression, highly expressed in liver and small intestine and, at lower levels, in colon, kidney and spleen.

Its subcellular location is the lipid droplet. It localises to the endoplasmic reticulum membrane. It is found in the golgi apparatus. The protein localises to the cytoplasmic vesicle. The protein resides in the COPI-coated vesicle. Functionally, lipid transferase specifically expressed in hepatocytes, which promotes unilocular lipid droplet formation by mediating lipid droplet fusion. Lipid droplet fusion promotes their enlargement, restricting lipolysis and favoring lipid storage. Localizes on the lipid droplet surface, at focal contact sites between lipid droplets, and mediates atypical lipid droplet fusion by promoting directional net neutral lipid transfer from the smaller to larger lipid droplets. The transfer direction may be driven by the internal pressure difference between the contacting lipid droplet pair. Promotes lipid exchange and lipid droplet fusion in both small and large lipid droplet-containing hepatocytes. In addition to its role in lipid droplet fusion, also involved in cytoplasmic vesicle biogenesis and transport. Required for very-low-density lipoprotein (VLDL) lipidation and maturation. Probably involved in the biogenesis of VLDL transport vesicles by forming a COPII vesicle coat and facilitating the formation of endoplasmic reticulum-derived large vesicles. Also involved in sterol-regulated export of the SCAP-SREBP complex, composed of SCAP, SREBF1/SREBP1 and SREBF2/SREBP2, by promoting loading of SCAP-SREBP into COPII vesicles. May also activate apoptosis. In terms of biological role, (Microbial infection) Involved in Hepatatis C virus (HCV) assembly and required for HCV entry into hepatocytes. The sequence is that of Lipid transferase CIDEB from Homo sapiens (Human).